A 510-amino-acid polypeptide reads, in one-letter code: Probable gamma-aminobutyrate transaminase 3, mitochondrial (510 aa).

A mitochondrion-targeting transit peptide spans 1–41 (MICRSLLLLRSNAASKASNIVKHVAATGCLPKYSSEAPARY). 166–167 (GS) is a pyridoxal 5'-phosphate binding site. Residue Tyr199 coordinates substrate. Residue Asp306 participates in pyridoxal 5'-phosphate binding. Position 335 (Lys335) interacts with substrate. An N6-(pyridoxal phosphate)lysine modification is found at Lys335.

This sequence belongs to the class-III pyridoxal-phosphate-dependent aminotransferase family.

The protein resides in the mitochondrion. It catalyses the reaction 4-aminobutanoate + pyruvate = succinate semialdehyde + L-alanine. The catalysed reaction is 4-aminobutanoate + glyoxylate = succinate semialdehyde + glycine. Functionally, transaminase that degrades gamma-amino butyric acid (GABA). The chain is Probable gamma-aminobutyrate transaminase 3, mitochondrial from Oryza sativa subsp. japonica (Rice).